The following is a 555-amino-acid chain: GMP synthase [glutamine-hydrolyzing] (555 aa).

One can recognise a Glutamine amidotransferase type-1 domain in the interval 8–234 (KILVLNFGSQ…AYNICKCKKQ (227 aa)). The active-site Nucleophile; for GATase activity is the Cys89. Positions 93, 169, 172, and 208 each coordinate L-glutamine. Residues His208 and Glu210 each act as for GATase activity in the active site. One can recognise a GMPS ATP-PPase domain in the interval 235–430 (FDPIRYHELE…LNLPEEITNR (196 aa)). 262-268 (SGGIDST) provides a ligand contact to ATP. Positions 336, 476, 547, 552, and 553 each coordinate XMP.

Homodimer (via the GMPS ATP-PPase domain). The cofactor is Mg(2+).

The catalysed reaction is XMP + L-glutamine + ATP + H2O = GMP + L-glutamate + AMP + diphosphate + 2 H(+). It functions in the pathway purine metabolism; GMP biosynthesis; GMP from XMP (L-Gln route): step 1/1. The GATase domain is allosterically activated by the binding of substrates, ATP and XMP, to the ATPPase domain, thus ensuring that glutamine hydrolysis occurs only when the ATPPase domain is primed to receive ammonia. Inhibited by Na(+). Inhibited by the reaction product GMP. Its function is as follows. Catalyzes the conversion of xanthine monophosphate (XMP) to GMP in the presence of glutamine and ATP through an adenyl-XMP intermediate, which is the final step of de novo synthesis of GMP. The conversion of XMP to GMP involves the coordinated action of the glutamine amidotransferase (GATase) domain that catalyzes the hydrolysis of the amide side chain of glutamine producing ammonia and the ATP pyrophosphatase (ATPPase) domain that catalyzes the synthesis of adenyl-XMP intermediate from ATP. The ammonia produced by the GATase domain is tunnelled to the ATP-PPase domain where it attacks the adenyl-XMP intermediate generating GMP. The sequence is that of GMP synthase [glutamine-hydrolyzing] from Plasmodium falciparum (isolate 3D7).